Here is a 317-residue protein sequence, read N- to C-terminus: Cell division protein FtsQ (317 aa).

At 1 to 63 (MDGGGRFVFA…RIHIPAHTGT (63 aa)) the chain is on the cytoplasmic side. The chain crosses the membrane as a helical span at residues 64–82 (ISAVAFYAMIGLYGMSLGG). Residues 83–317 (HTNIVTQTTT…KALKKAEKNT (235 aa)) lie on the Periplasmic side of the membrane. One can recognise a POTRA domain in the interval 97–165 (FAVEDVKVSG…KTVEVRLKER (69 aa)).

This sequence belongs to the FtsQ/DivIB family. FtsQ subfamily.

It is found in the cell inner membrane. In terms of biological role, essential cell division protein. The chain is Cell division protein FtsQ from Agrobacterium fabrum (strain C58 / ATCC 33970) (Agrobacterium tumefaciens (strain C58)).